Consider the following 315-residue polypeptide: Olfactory receptor 5M1 (315 aa).

At 1-25 (MFSPNHTIVTEFILLGLTDDPVLEK) the chain is on the extracellular side. N-linked (GlcNAc...) asparagine glycosylation is present at Asn5. The chain crosses the membrane as a helical span at residues 26–46 (ILFGVFLAIYLITLAGNLCMI). Topologically, residues 47-54 (LLIRTNSH) are cytoplasmic. The helical transmembrane segment at 55–75 (LQTPMYFFLGHLSFVDICYSS) threads the bilayer. Residues 76-99 (NVTPNMLHNFLSEQKTISYAGCFT) lie on the Extracellular side of the membrane. Cys97 and Cys189 are joined by a disulfide. The helical transmembrane segment at 100 to 120 (QCLLFIALVITEFYILASMAL) threads the bilayer. Topologically, residues 121–139 (DRYVAICSPLHYSSRMSKN) are cytoplasmic. Residues 140–160 (ICVCLVTIPYMYGFLSGFSQS) form a helical membrane-spanning segment. Topologically, residues 161 to 196 (LLTFHLSFCGSLEINHFYCADPPLIMLACSDTRVKK) are extracellular. The helical transmembrane segment at 197-217 (MAMFVVAGFNLSSSLFIILLS) threads the bilayer. Residues 218–237 (YLFIFAAIFRIRSAEGRHKA) lie on the Cytoplasmic side of the membrane. The helical transmembrane segment at 238-258 (FSTCASHLTIVTLFYGTLFCM) threads the bilayer. The Extracellular segment spans residues 259–271 (YVRPPSEKSVEES). Residues 272–292 (KITAVFYTFLSPMLNPLIYSL) traverse the membrane as a helical segment. The Cytoplasmic portion of the chain corresponds to 293-315 (RNTDVILAMQQMIRGKSFHKIAV).

Belongs to the G-protein coupled receptor 1 family.

It localises to the cell membrane. Odorant receptor. In Homo sapiens (Human), this protein is Olfactory receptor 5M1 (OR5M1).